A 66-amino-acid polypeptide reads, in one-letter code: MPQLDTSTWLTMILSMFLTLFIIFQLKVSKHNFYHNPELTPTKMLKQNTPWETKWTKIYLPLLLPL.

Position 1 is an N-formylmethionine (M1). Residues 8–24 (TWLTMILSMFLTLFIIF) form a helical membrane-spanning segment. Position 54 is an N6-acetyllysine; alternate (K54). K54 is subject to N6-succinyllysine; alternate. K57 carries the post-translational modification N6-acetyllysine.

Belongs to the ATPase protein 8 family. Component of the ATP synthase complex composed at least of ATP5F1A/subunit alpha, ATP5F1B/subunit beta, ATP5MC1/subunit c (homooctomer), MT-ATP6/subunit a, MT-ATP8/subunit 8, ATP5ME/subunit e, ATP5MF/subunit f, ATP5MG/subunit g, ATP5MK/subunit k, ATP5MJ/subunit j, ATP5F1C/subunit gamma, ATP5F1D/subunit delta, ATP5F1E/subunit epsilon, ATP5PF/subunit F6, ATP5PB/subunit b, ATP5PD/subunit d, ATP5PO/subunit OSCP. ATP synthase complex consists of a soluble F(1) head domain (subunits alpha(3) and beta(3)) - the catalytic core - and a membrane F(0) domain - the membrane proton channel (subunits c, a, 8, e, f, g, k and j). These two domains are linked by a central stalk (subunits gamma, delta, and epsilon) rotating inside the F1 region and a stationary peripheral stalk (subunits F6, b, d, and OSCP). Interacts with PRICKLE3.

It is found in the mitochondrion membrane. Functionally, subunit 8, of the mitochondrial membrane ATP synthase complex (F(1)F(0) ATP synthase or Complex V) that produces ATP from ADP in the presence of a proton gradient across the membrane which is generated by electron transport complexes of the respiratory chain. ATP synthase complex consist of a soluble F(1) head domain - the catalytic core - and a membrane F(1) domain - the membrane proton channel. These two domains are linked by a central stalk rotating inside the F(1) region and a stationary peripheral stalk. During catalysis, ATP synthesis in the catalytic domain of F(1) is coupled via a rotary mechanism of the central stalk subunits to proton translocation. In vivo, can only synthesize ATP although its ATP hydrolase activity can be activated artificially in vitro. Part of the complex F(0) domain. The sequence is that of ATP synthase F(0) complex subunit 8 from Bos taurus (Bovine).